The following is a 608-amino-acid chain: Granule-bound starch synthase 1, chloroplastic/amyloplastic (608 aa).

The N-terminal 78 residues, 1–78, are a transit peptide targeting the chloroplast; it reads MATVIAAHFV…NGRPAAKIIC (78 aa). ADP-alpha-D-glucose is bound at residue Lys96. The interval 587-608 is disordered; it reads GSEPGTEGEEIAPLAKENVPTP.

Belongs to the glycosyltransferase 1 family. Bacterial/plant glycogen synthase subfamily. Synthesized in a number of different organs, but most abundantly in tubers.

It localises to the plastid. Its subcellular location is the chloroplast. The protein localises to the amyloplast. The enzyme catalyses an NDP-alpha-D-glucose + [(1-&gt;4)-alpha-D-glucosyl](n) = [(1-&gt;4)-alpha-D-glucosyl](n+1) + a ribonucleoside 5'-diphosphate + H(+). The protein operates within glycan biosynthesis; starch biosynthesis. Functionally, responsible for the synthesis of amylose in reserve starch. The sequence is that of Granule-bound starch synthase 1, chloroplastic/amyloplastic (WAXY) from Manihot esculenta (Cassava).